Here is a 397-residue protein sequence, read N- to C-terminus: Elongation factor Tu (397 aa).

The tr-type G domain maps to Leu10–Glu207. Residues Gly19–Thr26 are G1. Gly19–Thr26 is a GTP binding site. Thr26 lines the Mg(2+) pocket. Positions Gly60–Asn64 are G2. Residues Asp81–Gly84 form a G3 region. Residues Asp81–His85 and Asn136–Asp139 contribute to the GTP site. The tract at residues Asn136 to Asp139 is G4. The G5 stretch occupies residues Ser174 to Arg176.

It belongs to the TRAFAC class translation factor GTPase superfamily. Classic translation factor GTPase family. EF-Tu/EF-1A subfamily. In terms of assembly, monomer.

Its subcellular location is the cytoplasm. The catalysed reaction is GTP + H2O = GDP + phosphate + H(+). In terms of biological role, GTP hydrolase that promotes the GTP-dependent binding of aminoacyl-tRNA to the A-site of ribosomes during protein biosynthesis. This is Elongation factor Tu from Pseudomonas fluorescens (strain Pf0-1).